The sequence spans 815 residues: uncharacterized protein (815 aa).

The signal sequence occupies residues 1–25 (MVVMKKKRILIVSAIVLLFLTVASA). 6 consecutive transmembrane segments (helical) span residues 127–147 (FGEA…CVRG), 157–177 (ILFI…GYYM), 311–331 (SFIA…LAFF), 333–353 (FLLQ…FILA), 372–392 (VYLL…TCFI), and 401–421 (GFGM…IGFH). Residues 483–815 (KDGSNADGVT…DRLRRDERTR (333 aa)) form a disordered region. Over residues 513-543 (HAISRTPQKETANGIANHNSRSLKRNPQTLS) the composition is skewed to polar residues. Basic and acidic residues-rich tracts occupy residues 544 to 563 (KEQE…ENKQ) and 599 to 614 (QDKK…KEYV). Residues 619 to 630 (KQPNNQQQTDDA) show a composition bias toward polar residues. The span at 648 to 658 (ENEKDTERTDQ) shows a compositional bias: basic and acidic residues. A compositionally biased stretch (polar residues) spans 665 to 678 (EQNQNLETDQQQDF). Over residues 696–705 (KTAEIKRSDQ) the composition is skewed to basic and acidic residues. The segment covering 720–732 (SPQSTKVENQPIA) has biased composition (polar residues). Residues 734-757 (NERKIRPSEPAKVHSDGIRVDEKQ) are compositionally biased toward basic and acidic residues. Residues 773 to 793 (PSSQTIKRTEQSVNSFDQVSL) are compositionally biased toward polar residues. A compositionally biased stretch (basic and acidic residues) spans 796–815 (IARRSSSKVEDRLRRDERTR).

It is found in the cell membrane. This is an uncharacterized protein from Bacillus subtilis (strain 168).